The sequence spans 382 residues: MKLHEYQAKEVFADAGIPTPESALATSVDEAVEVADALDYPVAVKAQVHVGGRGKAGGIKLAENTAEAREAAESILGMDLKGYTVDRVLVEEAVDFTNELYVGVTMDRSEGAPVVMVSERGGVDIESVAEEAPEDIVREHVDPSFGLQAYQARNAVYDAGIEQDVAGDVAKIVQGVYDLWADSDATEVEINPVMVTSERDVVAADAVMKLDEDALFRQPAFADMEEDAAEDDLEAKANEYGFDYVRLDGNTGIIGNGAGLVMTTLDLVDYYGGQPANFLDIGGGAKADRVANALDMVFSDENVDSVVFNIFGGITRGDEVAKGINSALEQFDEIPTPVVVRLAGTNAAEGREILNDDLVTVEETLEGAVQRAVEYADEEDIQ.

The ATP-grasp domain maps to 9 to 236 (KEVFADAGIP…DAAEDDLEAK (228 aa)). ATP is bound by residues lysine 45, 52 to 54 (GRG), glutamate 91, valine 94, and glutamate 99. Mg(2+)-binding residues include asparagine 191 and aspartate 205. Substrate contacts are provided by residues asparagine 256 and 313–315 (GIT).

Belongs to the succinate/malate CoA ligase beta subunit family. Heterotetramer of two alpha and two beta subunits. Mg(2+) serves as cofactor.

It catalyses the reaction succinate + ATP + CoA = succinyl-CoA + ADP + phosphate. The catalysed reaction is GTP + succinate + CoA = succinyl-CoA + GDP + phosphate. It participates in carbohydrate metabolism; tricarboxylic acid cycle; succinate from succinyl-CoA (ligase route): step 1/1. Its function is as follows. Succinyl-CoA synthetase functions in the citric acid cycle (TCA), coupling the hydrolysis of succinyl-CoA to the synthesis of either ATP or GTP and thus represents the only step of substrate-level phosphorylation in the TCA. The beta subunit provides nucleotide specificity of the enzyme and binds the substrate succinate, while the binding sites for coenzyme A and phosphate are found in the alpha subunit. The sequence is that of Succinate--CoA ligase [ADP-forming] subunit beta from Halobacterium salinarum (strain ATCC 29341 / DSM 671 / R1).